Here is a 236-residue protein sequence, read N- to C-terminus: NAD(P)H-hydrate epimerase (236 aa).

The YjeF N-terminal domain maps to 11–217 (AAALDQELMS…AIASKYGFEV (207 aa)). 61–65 (NNGGD) contributes to the (6S)-NADPHX binding site. The K(+) site is built by asparagine 62 and aspartate 123. (6S)-NADPHX contacts are provided by residues 127-133 (GFSFSGE) and aspartate 156. K(+) is bound at residue serine 159.

It belongs to the NnrE/AIBP family. The cofactor is K(+).

It localises to the cytoplasm. The protein resides in the mitochondrion. It carries out the reaction (6R)-NADHX = (6S)-NADHX. The enzyme catalyses (6R)-NADPHX = (6S)-NADPHX. Its function is as follows. Catalyzes the epimerization of the S- and R-forms of NAD(P)HX, a damaged form of NAD(P)H that is a result of enzymatic or heat-dependent hydration. This is a prerequisite for the S-specific NAD(P)H-hydrate dehydratase to allow the repair of both epimers of NAD(P)HX. In Fusarium vanettenii (strain ATCC MYA-4622 / CBS 123669 / FGSC 9596 / NRRL 45880 / 77-13-4) (Fusarium solani subsp. pisi), this protein is NAD(P)H-hydrate epimerase.